We begin with the raw amino-acid sequence, 275 residues long: 3-methyl-2-oxobutanoate hydroxymethyltransferase (275 aa).

Mg(2+)-binding residues include aspartate 49 and aspartate 88. 3-methyl-2-oxobutanoate contacts are provided by residues 49–50, aspartate 88, and lysine 118; that span reads DS. A Mg(2+)-binding site is contributed by glutamate 120. Residue glutamate 187 is the Proton acceptor of the active site.

It belongs to the PanB family. As to quaternary structure, homodecamer; pentamer of dimers. The cofactor is Mg(2+).

It is found in the cytoplasm. The enzyme catalyses 3-methyl-2-oxobutanoate + (6R)-5,10-methylene-5,6,7,8-tetrahydrofolate + H2O = 2-dehydropantoate + (6S)-5,6,7,8-tetrahydrofolate. The protein operates within cofactor biosynthesis; (R)-pantothenate biosynthesis; (R)-pantoate from 3-methyl-2-oxobutanoate: step 1/2. Functionally, catalyzes the reversible reaction in which hydroxymethyl group from 5,10-methylenetetrahydrofolate is transferred onto alpha-ketoisovalerate to form ketopantoate. This Bordetella petrii (strain ATCC BAA-461 / DSM 12804 / CCUG 43448) protein is 3-methyl-2-oxobutanoate hydroxymethyltransferase.